A 177-amino-acid chain; its full sequence is Copper-binding regulatory protein cuf2 (177 aa).

A DNA-binding region (copper-fist) is located at residues 1-40 (MIIIDGKNYACVVCLRGHRGSSCQHQERALIEVRTRGRPL). Zn(2+) is bound by residues Cys-11, Cys-14, Cys-23, and His-25.

Its subcellular location is the nucleus. This is Copper-binding regulatory protein cuf2 (cuf2) from Schizosaccharomyces pombe (strain 972 / ATCC 24843) (Fission yeast).